We begin with the raw amino-acid sequence, 131 residues long: D-ribose pyranase (131 aa).

The active-site Proton donor is the histidine 20. Residues aspartate 28, histidine 98, and 120-122 (YCN) contribute to the substrate site.

Belongs to the RbsD / FucU family. RbsD subfamily. Homodecamer.

It is found in the cytoplasm. The enzyme catalyses beta-D-ribopyranose = beta-D-ribofuranose. The protein operates within carbohydrate metabolism; D-ribose degradation; D-ribose 5-phosphate from beta-D-ribopyranose: step 1/2. Functionally, catalyzes the interconversion of beta-pyran and beta-furan forms of D-ribose. This chain is D-ribose pyranase, found in Coprothermobacter proteolyticus (strain ATCC 35245 / DSM 5265 / OCM 4 / BT).